Here is a 628-residue protein sequence, read N- to C-terminus: E3 SUMO-protein ligase PIAS3 (628 aa).

An interaction with CCAR2 region spans residues M1–S200. One can recognise an SAP domain in the interval V11–L45. The short motif at L19 to L23 is the LXXLL motif element. Glycyl lysine isopeptide (Lys-Gly) (interchain with G-Cter in SUMO2) cross-links involve residues K46, K56, K230, and K307. The PINIT domain occupies M115–L280. The SP-RING-type zinc finger occupies P312–D393. 4 residues coordinate Zn(2+): C343, H345, C366, and C369. The tract at residues L450–D460 is SUMO1-binding. Residues K466 and K482 each participate in a glycyl lysine isopeptide (Lys-Gly) (interchain with G-Cter in SUMO2) cross-link. Residues V597–L617 form a disordered region.

It belongs to the PIAS family. As to quaternary structure, monomer. Binds SUMO1 and UBE2I. Interacts with BCL11A, HMGA2, IRF1, MITF and NCOA2. Interacts with STAT5; the interaction occurs on stimulation by PRL. Interacts with GFI1; the interaction relieves the inhibitory effect of PIAS3 on STAT3-mediated transcriptional activity. Interacts with AR, PLAG1 and ZFHX3. Interacts with STAT3; the interaction occurs on stimulation by IL6, CNTF or OSM and inhibits the DNA binding activity of STAT3. Interacts with MTA1. Interacts with CCAR2 (via N-terminus). Interacts with TRIM8. Interacts with PRDM1/Blimp-1. In terms of processing, sumoylated. Widely expressed.

It localises to the cytoplasm. Its subcellular location is the nucleus. It is found in the nucleus speckle. It functions in the pathway protein modification; protein sumoylation. In terms of biological role, functions as an E3-type small ubiquitin-like modifier (SUMO) ligase, stabilizing the interaction between UBE2I and the substrate, and as a SUMO-tethering factor. Plays a crucial role as a transcriptional coregulation in various cellular pathways, including the STAT pathway and the steroid hormone signaling pathway. Involved in regulating STAT3 signaling via inhibiting STAT3 DNA-binding and suppressing cell growth. Enhances the sumoylation of MTA1 and may participate in its paralog-selective sumoylation. Sumoylates CCAR2 which promotes its interaction with SIRT1. Diminishes the sumoylation of ZFHX3 by preventing the colocalization of ZFHX3 with SUMO1 in the nucleus. The polypeptide is E3 SUMO-protein ligase PIAS3 (PIAS3) (Homo sapiens (Human)).